We begin with the raw amino-acid sequence, 521 residues long: Bifunctional purine biosynthesis protein PurH (521 aa).

The region spanning 1–145 (MIKQALISVS…KNHRDVTVVV (145 aa)) is the MGS-like domain.

This sequence belongs to the PurH family.

The enzyme catalyses (6R)-10-formyltetrahydrofolate + 5-amino-1-(5-phospho-beta-D-ribosyl)imidazole-4-carboxamide = 5-formamido-1-(5-phospho-D-ribosyl)imidazole-4-carboxamide + (6S)-5,6,7,8-tetrahydrofolate. The catalysed reaction is IMP + H2O = 5-formamido-1-(5-phospho-D-ribosyl)imidazole-4-carboxamide. The protein operates within purine metabolism; IMP biosynthesis via de novo pathway; 5-formamido-1-(5-phospho-D-ribosyl)imidazole-4-carboxamide from 5-amino-1-(5-phospho-D-ribosyl)imidazole-4-carboxamide (10-formyl THF route): step 1/1. It functions in the pathway purine metabolism; IMP biosynthesis via de novo pathway; IMP from 5-formamido-1-(5-phospho-D-ribosyl)imidazole-4-carboxamide: step 1/1. This Burkholderia cenocepacia (strain ATCC BAA-245 / DSM 16553 / LMG 16656 / NCTC 13227 / J2315 / CF5610) (Burkholderia cepacia (strain J2315)) protein is Bifunctional purine biosynthesis protein PurH.